The chain runs to 257 residues: Type III pantothenate kinase (257 aa).

6 to 13 (DVGNTNTV) contributes to the ATP binding site. Substrate contacts are provided by residues tyrosine 102 and 109-112 (GADR). The active-site Proton acceptor is the aspartate 111. K(+) is bound at residue aspartate 131. Threonine 134 lines the ATP pocket. Residue threonine 186 participates in substrate binding.

It belongs to the type III pantothenate kinase family. As to quaternary structure, homodimer. The cofactor is NH4(+). K(+) serves as cofactor.

It localises to the cytoplasm. It carries out the reaction (R)-pantothenate + ATP = (R)-4'-phosphopantothenate + ADP + H(+). It functions in the pathway cofactor biosynthesis; coenzyme A biosynthesis; CoA from (R)-pantothenate: step 1/5. Catalyzes the phosphorylation of pantothenate (Pan), the first step in CoA biosynthesis. The sequence is that of Type III pantothenate kinase from Leptospira borgpetersenii serovar Hardjo-bovis (strain JB197).